We begin with the raw amino-acid sequence, 313 residues long: ADP-L-glycero-D-manno-heptose-6-epimerase (313 aa).

NADP(+) contacts are provided by residues 10–11 (MI), 31–32 (DN), K38, K53, 75–79 (EGACS), and N92. Y139 acts as the Proton acceptor in catalysis. K143 serves as a coordination point for NADP(+). N174 contributes to the substrate binding site. 2 residues coordinate NADP(+): V175 and K183. The active-site Proton acceptor is K183. Substrate-binding positions include S185, H192, 206-209 (FEGS), R214, and Y277.

It belongs to the NAD(P)-dependent epimerase/dehydratase family. HldD subfamily. In terms of assembly, homopentamer. Requires NADP(+) as cofactor.

It carries out the reaction ADP-D-glycero-beta-D-manno-heptose = ADP-L-glycero-beta-D-manno-heptose. Its pathway is nucleotide-sugar biosynthesis; ADP-L-glycero-beta-D-manno-heptose biosynthesis; ADP-L-glycero-beta-D-manno-heptose from D-glycero-beta-D-manno-heptose 7-phosphate: step 4/4. Functionally, catalyzes the interconversion between ADP-D-glycero-beta-D-manno-heptose and ADP-L-glycero-beta-D-manno-heptose via an epimerization at carbon 6 of the heptose. This Aliivibrio fischeri (strain ATCC 700601 / ES114) (Vibrio fischeri) protein is ADP-L-glycero-D-manno-heptose-6-epimerase.